The sequence spans 577 residues: Arginine--tRNA ligase (577 aa).

The 'HIGH' region motif lies at 122 to 132 (PNVAKEMHVGH).

It belongs to the class-I aminoacyl-tRNA synthetase family. In terms of assembly, monomer.

It is found in the cytoplasm. The enzyme catalyses tRNA(Arg) + L-arginine + ATP = L-arginyl-tRNA(Arg) + AMP + diphosphate. The chain is Arginine--tRNA ligase from Haemophilus influenzae (strain 86-028NP).